A 494-amino-acid polypeptide reads, in one-letter code: MLTWTLWCGLLFLLWIYFLWSRRRFYLLTLKIPGPLGYPILGMAHWLMRREDILNAFGCFLDKHGPTIFSWLGPIPFMIVSDPQVVQDIFTSPHCVNKGIIYKAVDDGAGVGLFSLKDPRWSIHRKLLNPAFGHKVLLSFLPIFNRETALLLDQLEPLQDDGEKDLIPLLQSFTLGIATQTTMGSDVKDEESFRSNSLLGRYQCILETMTDMCFSPWLNSRFCRQLAGKESHYYQAKTEIRQFIRKIIERKLAEDEMGALPSIQSNDKNLFLNLVTDLMRRGVFTLKNVEDESNIIVFGAFETTANAVYYTLMLLAMFPEYQERAFEEIKTIFPNTGDFDVSYADTQQMVYLDLILNESMRVIPPVPVVSRQTSQDLKLSNGIVVPKGVQIAIDIYHMHRSKKIWGPDAETFNPDHFLPHNIQDKHPYAYIPFTKGIRNCIGWRYALISAKVTLAKLLRNYRFKTSFPFENLYFVEDITMKLKSVPLLELQKRT.

Cys-440 is a heme binding site.

This sequence belongs to the cytochrome P450 family. Heme is required as a cofactor.

Its subcellular location is the endoplasmic reticulum membrane. It localises to the microsome membrane. Functionally, may be involved in the metabolism of insect hormones and in the breakdown of synthetic insecticides. This Drosophila melanogaster (Fruit fly) protein is Probable cytochrome P450 313a4 (Cyp313a4).